The primary structure comprises 83 residues: ATP synthase subunit c, chloroplastic (83 aa).

Helical transmembrane passes span 3 to 23 (PIIS…AAIG) and 57 to 77 (LAFM…LLFA).

Belongs to the ATPase C chain family. F-type ATPases have 2 components, F(1) - the catalytic core - and F(0) - the membrane proton channel. F(1) has five subunits: alpha(3), beta(3), gamma(1), delta(1), epsilon(1). F(0) has four main subunits: a(1), b(1), b'(1) and c(10-14). The alpha and beta chains form an alternating ring which encloses part of the gamma chain. F(1) is attached to F(0) by a central stalk formed by the gamma and epsilon chains, while a peripheral stalk is formed by the delta, b and b' chains.

Its subcellular location is the plastid. It localises to the chloroplast thylakoid membrane. Its function is as follows. F(1)F(0) ATP synthase produces ATP from ADP in the presence of a proton or sodium gradient. F-type ATPases consist of two structural domains, F(1) containing the extramembraneous catalytic core and F(0) containing the membrane proton channel, linked together by a central stalk and a peripheral stalk. During catalysis, ATP synthesis in the catalytic domain of F(1) is coupled via a rotary mechanism of the central stalk subunits to proton translocation. Functionally, key component of the F(0) channel; it plays a direct role in translocation across the membrane. A homomeric c-ring of between 10-14 subunits forms the central stalk rotor element with the F(1) delta and epsilon subunits. In Diacronema lutheri (Unicellular marine alga), this protein is ATP synthase subunit c, chloroplastic.